The following is a 252-amino-acid chain: Triosephosphate isomerase (252 aa).

Position 10 to 12 (asparagine 10 to lysine 12) interacts with substrate. Histidine 96 acts as the Electrophile in catalysis. Catalysis depends on glutamate 168, which acts as the Proton acceptor. Residues glycine 174, serine 214, and glycine 235 to glycine 236 contribute to the substrate site.

Belongs to the triosephosphate isomerase family. In terms of assembly, homodimer.

It localises to the cytoplasm. It carries out the reaction D-glyceraldehyde 3-phosphate = dihydroxyacetone phosphate. It functions in the pathway carbohydrate biosynthesis; gluconeogenesis. The protein operates within carbohydrate degradation; glycolysis; D-glyceraldehyde 3-phosphate from glycerone phosphate: step 1/1. Functionally, involved in the gluconeogenesis. Catalyzes stereospecifically the conversion of dihydroxyacetone phosphate (DHAP) to D-glyceraldehyde-3-phosphate (G3P). This Lactococcus lactis subsp. lactis (strain IL1403) (Streptococcus lactis) protein is Triosephosphate isomerase.